The following is a 43-amino-acid chain: Protein PsbN (43 aa).

A helical transmembrane segment spans residues 4–24; sequence GILIVIFISCLLVSFTGYAVY.

The protein belongs to the PsbN family.

The protein localises to the plastid. Its subcellular location is the chloroplast thylakoid membrane. Its function is as follows. May play a role in photosystem I and II biogenesis. The polypeptide is Protein PsbN (Coleochaete orbicularis (Charophycean green alga)).